The primary structure comprises 186 residues: Peptidyl-tRNA hydrolase (186 aa).

Tyr-14 is a binding site for tRNA. His-19 (proton acceptor) is an active-site residue. 3 residues coordinate tRNA: Tyr-64, Asn-66, and Asn-112.

Belongs to the PTH family. Monomer.

The protein resides in the cytoplasm. The enzyme catalyses an N-acyl-L-alpha-aminoacyl-tRNA + H2O = an N-acyl-L-amino acid + a tRNA + H(+). Hydrolyzes ribosome-free peptidyl-tRNAs (with 1 or more amino acids incorporated), which drop off the ribosome during protein synthesis, or as a result of ribosome stalling. In terms of biological role, catalyzes the release of premature peptidyl moieties from peptidyl-tRNA molecules trapped in stalled 50S ribosomal subunits, and thus maintains levels of free tRNAs and 50S ribosomes. The protein is Peptidyl-tRNA hydrolase of Mesoplasma florum (strain ATCC 33453 / NBRC 100688 / NCTC 11704 / L1) (Acholeplasma florum).